Consider the following 377-residue polypeptide: Sterol 24-C-methyltransferase erg6 (377 aa).

This sequence belongs to the class I-like SAM-binding methyltransferase superfamily. Erg6/SMT family.

It localises to the microsome. The protein resides in the mitochondrion. It carries out the reaction lanosterol + S-adenosyl-L-methionine = eburicol + S-adenosyl-L-homocysteine + H(+). The protein operates within steroid metabolism; ergosterol biosynthesis. With respect to regulation, specific and total activity is decreased in presence of alpha-bisabolol. Functionally, sterol 24-C-methyltransferase; part of the third module of ergosterol biosynthesis pathway that includes the late steps of the pathway. Methylates lanosterol at C-24 to produce eburicol. The third module or late pathway involves the ergosterol synthesis itself through consecutive reactions that mainly occur in the endoplasmic reticulum (ER) membrane. Firstly, the squalene synthase erg9 catalyzes the condensation of 2 farnesyl pyrophosphate moieties to form squalene, which is the precursor of all steroids. Squalene synthase is crucial for balancing the incorporation of farnesyl diphosphate (FPP) into sterol and nonsterol isoprene synthesis. Secondly, squalene is converted into lanosterol by the consecutive action of the squalene epoxidase erg1 and the lanosterol synthase erg7. Then, the delta(24)-sterol C-methyltransferase erg6 methylates lanosterol at C-24 to produce eburicol. Eburicol is the substrate of the sterol 14-alpha demethylase encoded by cyp51A and cyp51B, to yield 4,4,24-trimethyl ergosta-8,14,24(28)-trienol. The C-14 reductase erg24 then reduces the C14=C15 double bond which leads to 4,4-dimethylfecosterol. A sequence of further demethylations at C-4, involving the C-4 demethylation complex containing the C-4 methylsterol oxidases erg25A or erg25B, the sterol-4-alpha-carboxylate 3-dehydrogenase erg26 and the 3-keto-steroid reductase erg27, leads to the production of fecosterol via 4-methylfecosterol. The C-8 sterol isomerase erg2 then catalyzes the reaction which results in unsaturation at C-7 in the B ring of sterols and thus converts fecosterol to episterol. The sterol-C5-desaturase erg3B then catalyzes the introduction of a C-5 double bond in the B ring to produce 5-dehydroepisterol. The 2 other sterol-C5-desaturases, erg3A and erg3C, seem to be less important in ergosterol biosynthesis. The C-22 sterol desaturase erg5 further converts 5-dehydroepisterol into ergosta-5,7,22,24(28)-tetraen-3beta-ol by forming the C-22(23) double bond in the sterol side chain. Finally, ergosta-5,7,22,24(28)-tetraen-3beta-ol is substrate of the C-24(28) sterol reductases erg4A and erg4B to produce ergosterol. Possible alternative sterol biosynthetic pathways might exist from fecosterol to ergosterol, depending on the activities of the erg3 isoforms. This chain is Sterol 24-C-methyltransferase erg6, found in Aspergillus fumigatus (strain ATCC MYA-4609 / CBS 101355 / FGSC A1100 / Af293) (Neosartorya fumigata).